Consider the following 619-residue polypeptide: MPIRQLPEILINQIAAGEVVQRPASVVKELVENAIDAGATRVDIELEAAGGRLIRIRDNGHGMAAQELPLAVLRHATSKIASLDDLEAVATLGFRGEALPSIVSVSRFTLMSRRAMDEHGAVLQIEGGTLGEVIPHAHAPGTTVEVRDLFYNVPARRKFLRAERTELGHIEEWARSLALAHPDLELRLSHNGKLSRRYKPGDWYSDARLIEILGEDFAHQALRVDHSGAGLRLHGCIVQPHYSRSNTDQQYLYVNGRAVRDRSVAHAVKQAYSDVLYQGRHPAYVLFLELDPARVDVNVHPAKQEVRFRDARLIHDFVYRTVQGTLAQTRAGTPPLAVGAGDVGGEGARPPVRHAVSFSGRRGGASHVLGSYSASTAPLMQSAPSVSVADAPAAYAALYAAPPTQVIDAVPQMQTGLPLAAGAGDVPPLGYAIAQLHGIYILAECADGLIVVDMHAAHERIGYERLKRAHDGIGLRTQPLLVPMTLMVAEREADVAECEAETLASLGFEVTRSGPGSLQVRSIPALLAQAEPEILLRDVLSDLSEHGHTRRVAEARDTLLATMACHGAVRAQRRLSISEMNALLRDMEATERSGQCNHGRPTWARFSLAEIDRWFLRGR.

It belongs to the DNA mismatch repair MutL/HexB family.

In terms of biological role, this protein is involved in the repair of mismatches in DNA. It is required for dam-dependent methyl-directed DNA mismatch repair. May act as a 'molecular matchmaker', a protein that promotes the formation of a stable complex between two or more DNA-binding proteins in an ATP-dependent manner without itself being part of a final effector complex. The sequence is that of DNA mismatch repair protein MutL from Xylella fastidiosa (strain 9a5c).